The primary structure comprises 621 residues: Phosphomethylpyrimidine synthase (621 aa).

A compositionally biased stretch (low complexity) spans 1–23; that stretch reads MTAPFLSSLSPTSPLASATAPFP. The disordered stretch occupies residues 1–29; the sequence is MTAPFLSSLSPTSPLASATAPFPGSRKVY. Residues Asn-215, Met-244, Tyr-273, His-309, 329-331, 370-373, and Glu-409 each bind substrate; these read SRG and DGLR. His-413 contributes to the Zn(2+) binding site. Tyr-436 is a binding site for substrate. His-477 serves as a coordination point for Zn(2+). The [4Fe-4S] cluster site is built by Cys-557, Cys-560, and Cys-565.

This sequence belongs to the ThiC family. In terms of assembly, homodimer. It depends on [4Fe-4S] cluster as a cofactor.

The enzyme catalyses 5-amino-1-(5-phospho-beta-D-ribosyl)imidazole + S-adenosyl-L-methionine = 4-amino-2-methyl-5-(phosphooxymethyl)pyrimidine + CO + 5'-deoxyadenosine + formate + L-methionine + 3 H(+). Its pathway is cofactor biosynthesis; thiamine diphosphate biosynthesis. Catalyzes the synthesis of the hydroxymethylpyrimidine phosphate (HMP-P) moiety of thiamine from aminoimidazole ribotide (AIR) in a radical S-adenosyl-L-methionine (SAM)-dependent reaction. This chain is Phosphomethylpyrimidine synthase, found in Rhodospirillum rubrum (strain ATCC 11170 / ATH 1.1.1 / DSM 467 / LMG 4362 / NCIMB 8255 / S1).